The chain runs to 391 residues: Ethanol acetyltransferase 1 (391 aa).

A mitochondrion-targeting transit peptide spans 1–24; it reads MFFTKVLNNQVANGLKQLPVHKRV. The region spanning 48–154 is the AB hydrolase-1 domain; that stretch reads PIVFVHGIFG…DNSPIEQPHI (107 aa). Residues S121, D145, and H295 each act as charge relay system in the active site.

This sequence belongs to the AB hydrolase superfamily.

The protein resides in the mitochondrion. It carries out the reaction ethanol + acetyl-CoA = ethyl acetate + CoA. The enzyme catalyses acetyl-CoA + H2O = acetate + CoA + H(+). It catalyses the reaction ethyl acetate + H2O = ethanol + acetate + H(+). Its activity is regulated as follows. By ethanol. Thioesterase and esterase reactions are highly repressed in the presence of high ethanol concentrations. Alcohol acetyltransferase that catalyzes the synthesis of ethyl acetate from ethanol and acetyl-CoA. Can also function as a thioesterase by hydrolyzing acetyl-CoA in the absence of ethanol, as well as esterase hydrolyzing ethyl acetate. The sequence is that of Ethanol acetyltransferase 1 (EAT1) from Wickerhamomyces anomalus (strain ATCC 58044 / CBS 1984 / NCYC 433 / NRRL Y-366-8) (Yeast).